Reading from the N-terminus, the 449-residue chain is UDP-N-acetylmuramoylalanine--D-glutamate ligase (449 aa).

Residue 107-113 (GSNGKST) participates in ATP binding.

The protein belongs to the MurCDEF family.

It is found in the cytoplasm. The enzyme catalyses UDP-N-acetyl-alpha-D-muramoyl-L-alanine + D-glutamate + ATP = UDP-N-acetyl-alpha-D-muramoyl-L-alanyl-D-glutamate + ADP + phosphate + H(+). Its pathway is cell wall biogenesis; peptidoglycan biosynthesis. Its function is as follows. Cell wall formation. Catalyzes the addition of glutamate to the nucleotide precursor UDP-N-acetylmuramoyl-L-alanine (UMA). The polypeptide is UDP-N-acetylmuramoylalanine--D-glutamate ligase (Hydrogenovibrio crunogenus (strain DSM 25203 / XCL-2) (Thiomicrospira crunogena)).